Here is a 422-residue protein sequence, read N- to C-terminus: tRNA hydroxylation protein P (422 aa).

Residues 1–58 (MNQVELLSPAGNLKKLKIALNYGADAVYGGVSHFSLRNRAGKEFTLETFKEGIDYAHA) form the signal peptide.

Belongs to the peptidase U32 family.

Involved in prephenate-dependent formation of 5-hydroxyuridine (ho5U) modification at position 34 in tRNAs, the first step in 5-carboxymethoxyuridine (cmo5U) biosynthesis. The chain is tRNA hydroxylation protein P from Helicobacter pylori (strain ATCC 700392 / 26695) (Campylobacter pylori).